Here is a 416-residue protein sequence, read N- to C-terminus: Sarcosine oxidase subunit beta (416 aa).

Positions 41, 42, 63, 71, 76, and 78 each coordinate FAD. Residue H182 is modified to Tele-8alpha-FMN histidine. The FAD site is built by V206, G366, and K368.

Belongs to the SoxB family. In terms of assembly, heterotetramer composed of subunits alpha (SoxA), beta (SoxB), gamma (SoxG) and delta (SoxD). It depends on FAD as a cofactor. FMN serves as cofactor.

It localises to the cytoplasm. The catalysed reaction is sarcosine + (6S)-5,6,7,8-tetrahydrofolate + O2 = (6R)-5,10-methylene-5,6,7,8-tetrahydrofolate + glycine + H2O2. The enzyme catalyses sarcosine + O2 + H2O = formaldehyde + glycine + H2O2. In terms of biological role, in the presence of tetrahydrofolate, catalyzes the oxidative demethylation of sarcosine to yield glycine, 5,10-methylenetetrahydrofolate and hydrogen peroxide. In the absence of tetrahydrofolate, catalyzes the oxidative demethylation of sarcosine to yield glycine, formaldehyde and hydrogen peroxide. This Rhizobium meliloti (strain 1021) (Ensifer meliloti) protein is Sarcosine oxidase subunit beta (soxB).